The chain runs to 261 residues: 3-deoxy-manno-octulosonate cytidylyltransferase (261 aa).

The protein belongs to the KdsB family.

The protein resides in the cytoplasm. It catalyses the reaction 3-deoxy-alpha-D-manno-oct-2-ulosonate + CTP = CMP-3-deoxy-beta-D-manno-octulosonate + diphosphate. The protein operates within nucleotide-sugar biosynthesis; CMP-3-deoxy-D-manno-octulosonate biosynthesis; CMP-3-deoxy-D-manno-octulosonate from 3-deoxy-D-manno-octulosonate and CTP: step 1/1. It participates in bacterial outer membrane biogenesis; lipopolysaccharide biosynthesis. Its function is as follows. Activates KDO (a required 8-carbon sugar) for incorporation into bacterial lipopolysaccharide in Gram-negative bacteria. This chain is 3-deoxy-manno-octulosonate cytidylyltransferase, found in Marinobacter nauticus (strain ATCC 700491 / DSM 11845 / VT8) (Marinobacter aquaeolei).